Here is a 341-residue protein sequence, read N- to C-terminus: LIM and senescent cell antigen-like-containing domain protein 2 (341 aa).

LIM zinc-binding domains are found at residues 13-74 (AVCQ…LFAP), 76-133 (CGSC…EKAK), 138-195 (YICQ…KMGV), 196-255 (PICG…LFGD), and 256-315 (VCYN…FPLE). Phe22 carries the phosphoserine modification. Thr327 is subject to Phosphothreonine. A Phosphoserine modification is found at Ser328.

As to quaternary structure, interacts with TGFB1I1. Interacts with integrin-linked protein kinase 1 (ILK) via the first LIM domain, and in competition with LIMS1. Part of the heterotrimeric IPP complex composed of integrin-linked kinase (ILK), LIMS1 or LIMS2, and PARVA.

The protein resides in the nucleus. It is found in the cell junction. The protein localises to the focal adhesion. It localises to the cell membrane. Adapter protein in a cytoplasmic complex linking beta-integrins to the actin cytoskeleton, bridges the complex to cell surface receptor tyrosine kinases and growth factor receptors. Plays a role in modulating cell spreading and migration. The polypeptide is LIM and senescent cell antigen-like-containing domain protein 2 (LIMS2) (Homo sapiens (Human)).